A 473-amino-acid chain; its full sequence is Phenolic acid decarboxylase (473 aa).

Residues N160, H182, and E224 each coordinate Mn(2+). Residues 160–165 (NVGIYR) and 181–182 (QH) contribute to the prenylated FMN site. E273 functions as the Proton donor in the catalytic mechanism.

This sequence belongs to the UbiD family. YclC subfamily. Requires prenylated FMN as cofactor. The cofactor is Mn(2+).

The enzyme catalyses 4-hydroxybenzoate + H(+) = phenol + CO2. It carries out the reaction vanillate + H(+) = guaiacol + CO2. In terms of biological role, involved in the non-oxidative decarboxylation and detoxification of phenolic derivatives under both aerobic and anaerobic conditions. Phenolic acid decarboxylase that catalyzes the reversible decarboxylation of 4-hydroxybenzoate and vanillate. Could also catalyze the decarboxylation of salicylate. Is not active on di- and tri-hydroxybenzoate derivatives. This Bacillus subtilis (strain 168) protein is Phenolic acid decarboxylase.